The sequence spans 312 residues: Malate dehydrogenase (312 aa).

NAD(+) contacts are provided by residues 7 to 13 and Asp-34; that span reads GAAGGIG. Positions 81 and 87 each coordinate substrate. NAD(+) contacts are provided by residues Asn-94 and 117–119; that span reads ITN. Residues Asn-119 and Arg-153 each contribute to the substrate site. The active-site Proton acceptor is His-177. Position 227 (Met-227) interacts with NAD(+).

It belongs to the LDH/MDH superfamily. MDH type 1 family. As to quaternary structure, homodimer.

It catalyses the reaction (S)-malate + NAD(+) = oxaloacetate + NADH + H(+). Its function is as follows. Catalyzes the reversible oxidation of malate to oxaloacetate. In Shigella flexneri serotype 5b (strain 8401), this protein is Malate dehydrogenase.